We begin with the raw amino-acid sequence, 77 residues long: UPF0248 protein Pcal_0252 (77 aa).

This sequence belongs to the UPF0248 family.

The protein is UPF0248 protein Pcal_0252 of Pyrobaculum calidifontis (strain DSM 21063 / JCM 11548 / VA1).